Reading from the N-terminus, the 120-residue chain is Chaperonin GroEL (120 aa).

23–27 contacts ATP; that stretch reads DGTTT.

This sequence belongs to the chaperonin (HSP60) family. As to quaternary structure, forms a cylinder of 14 subunits composed of two heptameric rings stacked back-to-back. Interacts with the co-chaperonin GroES.

The protein localises to the cytoplasm. The catalysed reaction is ATP + H2O + a folded polypeptide = ADP + phosphate + an unfolded polypeptide.. In terms of biological role, together with its co-chaperonin GroES, plays an essential role in assisting protein folding. The GroEL-GroES system forms a nano-cage that allows encapsulation of the non-native substrate proteins and provides a physical environment optimized to promote and accelerate protein folding. In Mycolicibacterium rhodesiae (Mycobacterium rhodesiae), this protein is Chaperonin GroEL.